Consider the following 212-residue polypeptide: Pyridoxine/pyridoxamine 5'-phosphate oxidase (212 aa).

Substrate is bound by residues 7–10 and Lys66; that span reads RREY. FMN is bound by residues 61–66, 76–77, Lys83, and Gln105; these read RIVLLK and YT. The substrate site is built by Tyr123, Arg127, and Ser131. FMN-binding positions include 140 to 141 and Trp185; that span reads QS. A substrate-binding site is contributed by 191–193; it reads RLH. Position 195 (Arg195) interacts with FMN.

Belongs to the pyridoxamine 5'-phosphate oxidase family. In terms of assembly, homodimer. The cofactor is FMN.

The enzyme catalyses pyridoxamine 5'-phosphate + O2 + H2O = pyridoxal 5'-phosphate + H2O2 + NH4(+). The catalysed reaction is pyridoxine 5'-phosphate + O2 = pyridoxal 5'-phosphate + H2O2. It functions in the pathway cofactor metabolism; pyridoxal 5'-phosphate salvage; pyridoxal 5'-phosphate from pyridoxamine 5'-phosphate: step 1/1. Its pathway is cofactor metabolism; pyridoxal 5'-phosphate salvage; pyridoxal 5'-phosphate from pyridoxine 5'-phosphate: step 1/1. Its function is as follows. Catalyzes the oxidation of either pyridoxine 5'-phosphate (PNP) or pyridoxamine 5'-phosphate (PMP) into pyridoxal 5'-phosphate (PLP). This Idiomarina loihiensis (strain ATCC BAA-735 / DSM 15497 / L2-TR) protein is Pyridoxine/pyridoxamine 5'-phosphate oxidase.